A 669-amino-acid polypeptide reads, in one-letter code: Methionine--tRNA ligase (669 aa).

The 'HIGH' region signature appears at 14 to 24; sequence YYPSGKLHIGN. Residue histidine 161 participates in Zn(2+) binding. Positions 309–313 match the 'KMSKS' region motif; it reads KMSKS. Lysine 312 is a binding site for ATP. The 104-residue stretch at 566–669 folds into the tRNA-binding domain; that stretch reads DFDKVELKVA…KEMPNGAGIA (104 aa).

This sequence belongs to the class-I aminoacyl-tRNA synthetase family. MetG type 2B subfamily. Homodimer.

The protein resides in the cytoplasm. It carries out the reaction tRNA(Met) + L-methionine + ATP = L-methionyl-tRNA(Met) + AMP + diphosphate. Is required not only for elongation of protein synthesis but also for the initiation of all mRNA translation through initiator tRNA(fMet) aminoacylation. The polypeptide is Methionine--tRNA ligase (Enterococcus faecalis (strain ATCC 700802 / V583)).